A 605-amino-acid polypeptide reads, in one-letter code: Mini-chromosome maintenance complex-binding protein (605 aa).

A phosphoserine mark is found at Ser147 and Ser150.

The protein belongs to the MCMBP family. As to quaternary structure, interacts with the MCM complex.

The protein localises to the nucleus. Functionally, associated component of the MCM complex that acts as a regulator of DNA replication. Binds to the MCM complex during late S phase and may act by promoting the disassembly of the MCM complex from chromatin. This Drosophila melanogaster (Fruit fly) protein is Mini-chromosome maintenance complex-binding protein.